The following is a 454-amino-acid chain: Chromosomal replication initiator protein DnaA (454 aa).

The segment at 1-81 is domain I, interacts with DnaA modulators; the sequence is MNNSLWQQCA…PNVVLKVGEA (81 aa). A disordered region spans residues 79–110; the sequence is GEASPTQRDSGSPQRAAATRRKTPNFSSGNTD. The domain II stretch occupies residues 81-117; that stretch reads ASPTQRDSGSPQRAAATRRKTPNFSSGNTDVEVPFES. A compositionally biased stretch (polar residues) spans 82–91; that stretch reads SPTQRDSGSP. Positions 118 to 334 are domain III, AAA+ region; the sequence is NIHPEYTFDN…GALNRVVANV (217 aa). The ATP site is built by glycine 162, glycine 164, lysine 165, and threonine 166. The interval 335 to 454 is domain IV, binds dsDNA; that stretch reads QLTGRPITID…YRNLIRTLSS (120 aa).

The protein belongs to the DnaA family. As to quaternary structure, oligomerizes as a right-handed, spiral filament on DNA at oriC.

It is found in the cytoplasm. In terms of biological role, plays an essential role in the initiation and regulation of chromosomal replication. ATP-DnaA binds to the origin of replication (oriC) to initiate formation of the DNA replication initiation complex once per cell cycle. Binds the DnaA box (a 9 base pair repeat at the origin) and separates the double-stranded (ds)DNA. Forms a right-handed helical filament on oriC DNA; dsDNA binds to the exterior of the filament while single-stranded (ss)DNA is stabiized in the filament's interior. The ATP-DnaA-oriC complex binds and stabilizes one strand of the AT-rich DNA unwinding element (DUE), permitting loading of DNA polymerase. After initiation quickly degrades to an ADP-DnaA complex that is not apt for DNA replication. Binds acidic phospholipids. The protein is Chromosomal replication initiator protein DnaA of Idiomarina loihiensis (strain ATCC BAA-735 / DSM 15497 / L2-TR).